Reading from the N-terminus, the 89-residue chain is Small ribosomal subunit protein uS15 (89 aa).

The protein belongs to the universal ribosomal protein uS15 family. As to quaternary structure, part of the 30S ribosomal subunit. Forms a bridge to the 50S subunit in the 70S ribosome, contacting the 23S rRNA.

One of the primary rRNA binding proteins, it binds directly to 16S rRNA where it helps nucleate assembly of the platform of the 30S subunit by binding and bridging several RNA helices of the 16S rRNA. In terms of biological role, forms an intersubunit bridge (bridge B4) with the 23S rRNA of the 50S subunit in the ribosome. The chain is Small ribosomal subunit protein uS15 from Allorhizobium ampelinum (strain ATCC BAA-846 / DSM 112012 / S4) (Agrobacterium vitis (strain S4)).